We begin with the raw amino-acid sequence, 412 residues long: Probable cystathionine gamma-synthase 2 (412 aa).

Pyridoxal 5'-phosphate contacts are provided by Tyr76, Arg78, Gly106, Met107, Tyr131, Ser226, and Thr228. Residue Lys229 is modified to N6-(pyridoxal phosphate)lysine.

The protein belongs to the trans-sulfuration enzymes family. The cofactor is pyridoxal 5'-phosphate.

The catalysed reaction is O-phospho-L-homoserine + L-cysteine = L,L-cystathionine + phosphate. The enzyme catalyses O-succinyl-L-homoserine + L-cysteine = L,L-cystathionine + succinate + H(+). It participates in amino-acid biosynthesis; L-methionine biosynthesis via de novo pathway; L-cystathionine from O-succinyl-L-homoserine: step 1/1. Catalyzes the first committed step of methionine (Met) biosynthesis. Catalyzes the formation of L-cystathionine from homoserine esters and L-cysteine, via a gamma-replacement reaction. This Arabidopsis thaliana (Mouse-ear cress) protein is Probable cystathionine gamma-synthase 2.